Here is a 106-residue protein sequence, read N- to C-terminus: UPF0145 protein CKL_2433 (106 aa).

Belongs to the UPF0145 family.

The protein is UPF0145 protein CKL_2433 of Clostridium kluyveri (strain ATCC 8527 / DSM 555 / NBRC 12016 / NCIMB 10680 / K1).